The following is a 218-amino-acid chain: Pyridoxine/pyridoxamine 5'-phosphate oxidase (218 aa).

Residues 14 to 17 and K72 each bind substrate; that span reads RREY. FMN is bound by residues 67 to 72, 82 to 83, R88, K89, and Q111; these read RIVLLK and YT. Substrate-binding residues include Y129, R133, and S137. FMN-binding positions include 146–147 and W191; that span reads QS. 197 to 199 is a binding site for substrate; sequence RLH. R201 is an FMN binding site.

It belongs to the pyridoxamine 5'-phosphate oxidase family. As to quaternary structure, homodimer. It depends on FMN as a cofactor.

The catalysed reaction is pyridoxamine 5'-phosphate + O2 + H2O = pyridoxal 5'-phosphate + H2O2 + NH4(+). It carries out the reaction pyridoxine 5'-phosphate + O2 = pyridoxal 5'-phosphate + H2O2. It participates in cofactor metabolism; pyridoxal 5'-phosphate salvage; pyridoxal 5'-phosphate from pyridoxamine 5'-phosphate: step 1/1. The protein operates within cofactor metabolism; pyridoxal 5'-phosphate salvage; pyridoxal 5'-phosphate from pyridoxine 5'-phosphate: step 1/1. Catalyzes the oxidation of either pyridoxine 5'-phosphate (PNP) or pyridoxamine 5'-phosphate (PMP) into pyridoxal 5'-phosphate (PLP). The polypeptide is Pyridoxine/pyridoxamine 5'-phosphate oxidase (Escherichia coli O127:H6 (strain E2348/69 / EPEC)).